The sequence spans 413 residues: MDSTIFEIIIDEFDANCSLLDAFQDSFLHSESSSFFGFEGPYCSATIDQIGTCWPRSLAGELVERPCPDSFNGIRYNTTRNVYRECFENGTWASWMNYSQCVPILDNKRKYALHYKIALIINYLGHCISILALVIAFLLFLCLRSIRCLRNIIHWNLITTFILRNIMWFLLQMIDHNIHESNEVWCRCITTIYNYFVVTNFFWMFVEGCYLHTAIVMTYSTDKLRKWVFLFIGWCIPSPIIVTWAICKLFYENEQCWIGKEPGKYIDYIYQGRVILVLLINFVFLFNIVRILMTKLRASTTSETIQYRKAVKATLVLLPLLGITYMLFFVNPGEDDVSQIVFIYFNSFLQSFQGFFVSVFYCFLNGEVRSAARKRWHRWQDHHSLRVRVARAMSIPTSPTRISFHSIKQTAAV.

Positions 1-22 (MDSTIFEIIIDEFDANCSLLDA) form a signal peptide, not cleaved. Over 1 to 110 (MDSTIFEIII…CVPILDNKRK (110 aa)) the chain is Extracellular. Residue asparagine 16 is glycosylated (N-linked (GlcNAc...) asparagine). 3 disulfides stabilise this stretch: cysteine 17–cysteine 53, cysteine 43–cysteine 86, and cysteine 67–cysteine 101. N-linked (GlcNAc...) asparagine glycans are attached at residues asparagine 77, asparagine 89, and asparagine 97. The helical transmembrane segment at 111 to 141 (YALHYKIALIINYLGHCISILALVIAFLLFL) threads the bilayer. Residues 142–148 (CLRSIRC) are Cytoplasmic-facing. A helical transmembrane segment spans residues 149–173 (LRNIIHWNLITTFILRNIMWFLLQM). Over 174 to 187 (IDHNIHESNEVWCR) the chain is Extracellular. An intrachain disulfide couples cysteine 186 to cysteine 256. A helical transmembrane segment spans residues 188 to 216 (CITTIYNYFVVTNFFWMFVEGCYLHTAIV). Topologically, residues 217 to 223 (MTYSTDK) are cytoplasmic. The helical transmembrane segment at 224–251 (LRKWVFLFIGWCIPSPIIVTWAICKLFY) threads the bilayer. Residues 252–267 (ENEQCWIGKEPGKYID) lie on the Extracellular side of the membrane. A helical transmembrane segment spans residues 268-293 (YIYQGRVILVLLINFVFLFNIVRILM). The Cytoplasmic segment spans residues 294–304 (TKLRASTTSET). Residues 305–329 (IQYRKAVKATLVLLPLLGITYMLFF) traverse the membrane as a helical segment. Over 330 to 336 (VNPGEDD) the chain is Extracellular. A helical membrane pass occupies residues 337-366 (VSQIVFIYFNSFLQSFQGFFVSVFYCFLNG). Over 367–413 (EVRSAARKRWHRWQDHHSLRVRVARAMSIPTSPTRISFHSIKQTAAV) the chain is Cytoplasmic.

The protein belongs to the G-protein coupled receptor 2 family. In terms of processing, a N-glycosylation site within the signal peptide impedes its proper cleavage and function.

The protein resides in the cell membrane. G-protein coupled receptor for CRH (corticotropin-releasing factor), UCN (urocortin), UCN2 and UCN3. Has high affinity for UCN. Ligand binding causes a conformation change that triggers signaling via guanine nucleotide-binding proteins (G proteins) and down-stream effectors, such as adenylate cyclase. Promotes the activation of adenylate cyclase, leading to increased intracellular cAMP levels. The protein is Corticotropin-releasing factor receptor 2 (crhr2) of Xenopus laevis (African clawed frog).